Reading from the N-terminus, the 867-residue chain is Respiratory burst oxidase homolog protein B (867 aa).

Residues 1 to 13 (MEIENTRDSDSMR) show a composition bias toward basic and acidic residues. A disordered region spans residues 1–20 (MEIENTRDSDSMRGSRVGFS). The Cytoplasmic portion of the chain corresponds to 1–322 (MEIENTRDSD…DYFIEDNWKR (322 aa)). 2 positions are modified to phosphoserine; by CPK: serine 82 and serine 97. 2 EF-hand-like regions span residues 141 to 149 (AVNGMLTKS) and 175 to 186 (RCITSPAVTKDE). EF-hand domains are found at residues 198 to 233 (SFDARLQTFFDMVDKDADGRITQEEVKEIISLSASA) and 242 to 277 (NSDEYAALIMEELDPGNVGYIELYNLETLLLQAPSH). Residues aspartate 211, aspartate 213, aspartate 215, arginine 217, and glutamate 222 each coordinate Ca(2+). The helical transmembrane segment at 323 to 343 (IWVMALWLSICAGLFTWKFIQ) threads the bilayer. Topologically, residues 344 to 358 (YKRRAVFDVMGYCVS) are extracellular. Residues 359–379 (VAKGGAETTKFNMALVLLPVC) form a helical membrane-spanning segment. The 159-residue stretch at 361–519 (KGGAETTKFN…LFVIVYVLFI (159 aa)) folds into the Ferric oxidoreductase domain. The Cytoplasmic portion of the chain corresponds to 380-407 (RNTITWLRSRTKLGKIIPFDDNINFHKV). Residues 408-428 (IAFGIAVGVGLHAISHLTCDF) form a helical membrane-spanning segment. Residues 429-463 (PRLLHATDEEYEPMKPFFGDERPNNYWWFVKGTEG) lie on the Extracellular side of the membrane. Residues 464–484 (WTGVVMVVLMIIAYVLAQPWF) traverse the membrane as a helical segment. Residues 485 to 506 (RRNRLNLPSTIKKLTGFNAFWY) lie on the Cytoplasmic side of the membrane. Residues 507–527 (SHHLFVIVYVLFIIHGYFLYL) form a helical membrane-spanning segment. Residues 528-686 (SKKWYKKTTW…APAQDYKKYD (159 aa)) lie on the Extracellular side of the membrane. An FAD-binding FR-type domain is found at 558-681 (SGYKAVKILK…DGPYGAPAQD (124 aa)). A helical transmembrane segment spans residues 687–707 (VVLLVGLGIGATPLISIVKDV). The Cytoplasmic portion of the chain corresponds to 708–867 (LNNIKQQKNI…TKFEFHKENF (160 aa)).

Belongs to the RBOH (TC 5.B.1.3) family. Monomer and homodimer. Phosphorylation at Ser-82 and Ser-97 is required for full activity of RBOHB. Not phosphorylated at Ser-89. Phosphorylation at Ser-82 is induced by fungal elicitor treatment.

The protein localises to the cell membrane. Inhibited by diphenylene iodinium (DPI). Its function is as follows. Calcium-dependent NADPH oxidase that generates superoxide. Involved in the massive phase II oxidative burst induced by pathogen infection. This Solanum tuberosum (Potato) protein is Respiratory burst oxidase homolog protein B (RBOHB).